Reading from the N-terminus, the 131-residue chain is Small ribosomal subunit protein uS8 (131 aa).

It belongs to the universal ribosomal protein uS8 family. Part of the 30S ribosomal subunit. Contacts proteins S5 and S12.

One of the primary rRNA binding proteins, it binds directly to 16S rRNA central domain where it helps coordinate assembly of the platform of the 30S subunit. This chain is Small ribosomal subunit protein uS8, found in Pelodictyon phaeoclathratiforme (strain DSM 5477 / BU-1).